Reading from the N-terminus, the 240-residue chain is Uridylate kinase (240 aa).

An ATP-binding site is contributed by 14-17 (KLSG). Residue Gly56 participates in UMP binding. ATP contacts are provided by Gly57 and Arg61. Residues Asp76 and 137–144 (TGNPFFTT) contribute to the UMP site. ATP is bound by residues Thr164, Tyr170, and Asp173.

The protein belongs to the UMP kinase family. In terms of assembly, homohexamer.

Its subcellular location is the cytoplasm. The catalysed reaction is UMP + ATP = UDP + ADP. Its pathway is pyrimidine metabolism; CTP biosynthesis via de novo pathway; UDP from UMP (UMPK route): step 1/1. With respect to regulation, inhibited by UTP. Its function is as follows. Catalyzes the reversible phosphorylation of UMP to UDP. The chain is Uridylate kinase from Verminephrobacter eiseniae (strain EF01-2).